A 609-amino-acid polypeptide reads, in one-letter code: Glutamine--fructose-6-phosphate aminotransferase [isomerizing] (609 aa).

The Nucleophile; for GATase activity role is filled by Cys2. One can recognise a Glutamine amidotransferase type-2 domain in the interval 2-219 (CGIFGYLGNQ…SGEFAIVSQG (218 aa)). 2 consecutive SIS domains span residues 285–426 (LSDV…VHGA) and 458–599 (WAQP…IDCP). The active-site For Fru-6P isomerization activity is Lys604.

Homodimer.

The protein localises to the cytoplasm. The catalysed reaction is D-fructose 6-phosphate + L-glutamine = D-glucosamine 6-phosphate + L-glutamate. In terms of biological role, catalyzes the first step in hexosamine metabolism, converting fructose-6P into glucosamine-6P using glutamine as a nitrogen source. The sequence is that of Glutamine--fructose-6-phosphate aminotransferase [isomerizing] from Chlamydia pneumoniae (Chlamydophila pneumoniae).